The chain runs to 364 residues: MQERHTEQDYRALLIADTPIIDVRAPIEFEQGAMPAAINLPLMNNDERVAVGTCYKQQGSDAALALGHKLVAGEIRQQRMYAWRAACLQNPQGILCCARGGQRSHIVQSWLHAAGIDYPLVEGGYKALRQTTIQATIELAQKPIVLIGGCTGCGKTLLVQQQPNGVDLEGLARHRGSAFGRTLQPQLSQASFENLLAAEMLKTDARQNLRLWVLEDESRMIGSNHLPECLRERMTQAAIAVVEDPFEIRLERLNEEYFLRMHHDFTHAYGDEQGWQEYCEYLHHGLSAIKRRLGLQRYNELAARLDAALTTQLATGSTDGHLAWLVPLLKEYYDPMYRYQLEKKAEKVVFRGEWAEVAEWVKAR.

The 124-residue stretch at 14 to 137 (LIADTPIIDV…LRQTTIQATI (124 aa)) folds into the Rhodanese domain. Cys97 functions as the S-selanylcysteine intermediate in the catalytic mechanism.

The protein belongs to the SelU family. As to quaternary structure, monomer.

It carries out the reaction 5-methylaminomethyl-2-thiouridine(34) in tRNA + selenophosphate + (2E)-geranyl diphosphate + H2O + H(+) = 5-methylaminomethyl-2-selenouridine(34) in tRNA + (2E)-thiogeraniol + phosphate + diphosphate. The enzyme catalyses 5-methylaminomethyl-2-thiouridine(34) in tRNA + (2E)-geranyl diphosphate = 5-methylaminomethyl-S-(2E)-geranyl-thiouridine(34) in tRNA + diphosphate. It catalyses the reaction 5-methylaminomethyl-S-(2E)-geranyl-thiouridine(34) in tRNA + selenophosphate + H(+) = 5-methylaminomethyl-2-(Se-phospho)selenouridine(34) in tRNA + (2E)-thiogeraniol. The catalysed reaction is 5-methylaminomethyl-2-(Se-phospho)selenouridine(34) in tRNA + H2O = 5-methylaminomethyl-2-selenouridine(34) in tRNA + phosphate. Its function is as follows. Involved in the post-transcriptional modification of the uridine at the wobble position (U34) of tRNA(Lys), tRNA(Glu) and tRNA(Gln). Catalyzes the conversion of 2-thiouridine (S2U-RNA) to 2-selenouridine (Se2U-RNA). Acts in a two-step process involving geranylation of 2-thiouridine (S2U) to S-geranyl-2-thiouridine (geS2U) and subsequent selenation of the latter derivative to 2-selenouridine (Se2U) in the tRNA chain. This Escherichia coli O139:H28 (strain E24377A / ETEC) protein is tRNA 2-selenouridine synthase.